The primary structure comprises 673 residues: Protein transport Sec1a (673 aa).

Positions 538-591 (SSHKEESEARTGSVRKSSAPTAVPERKATPHSMRSRRTATWARPHSSDDGYSSD) are disordered.

The protein belongs to the STXBP/unc-18/SEC1 family. As to quaternary structure, does not bind the syntaxin KNOLLE.

Involved in the vesicle trafficking. Binds syntaxins. The sequence is that of Protein transport Sec1a (SEC1A) from Arabidopsis thaliana (Mouse-ear cress).